The sequence spans 264 residues: DNA-binding HTH-type transcriptional repressor TrmBL2 (264 aa).

A coiled-coil region spans residues 81-113 (LEKFIEEWQERVKEELEAKKKAKEELIELMKPL).

Belongs to the transcriptional regulator TrmB family.

The protein resides in the cytoplasm. It is found in the chromosome. In terms of biological role, an abundant chromosomal protein that seems to be involved in both genome architecture and transcription repression. Incubation with DNA in vitro gives fibrous structures 14.2 +/- 2.1 nm in thickness (naked DNA is 1.83 +/- 0.37 nm); does not significantly compact DNA. Binds to both coding and non-coding regions; binding within gene promoters correlates with decreased transcript levels, while binding within coding regions does not. This chain is DNA-binding HTH-type transcriptional repressor TrmBL2, found in Thermococcus kodakarensis (strain ATCC BAA-918 / JCM 12380 / KOD1) (Pyrococcus kodakaraensis (strain KOD1)).